A 205-amino-acid polypeptide reads, in one-letter code: High frequency lysogenization protein HflD homolog (205 aa).

This sequence belongs to the HflD family.

It localises to the cytoplasm. It is found in the cell inner membrane. In Aliivibrio fischeri (strain ATCC 700601 / ES114) (Vibrio fischeri), this protein is High frequency lysogenization protein HflD homolog.